Reading from the N-terminus, the 783-residue chain is Lon protease (783 aa).

The region spanning 11–203 is the Lon N-terminal domain; sequence IPVLPLRDVV…FLMGQMESEI (193 aa). 355–362 is a binding site for ATP; the sequence is GPPGVGKT. Residues 591–772 enclose the Lon proteolytic domain; sequence SNRIGQVTGL…DEVLKVALER (182 aa). Active-site residues include S678 and K721.

The protein belongs to the peptidase S16 family. In terms of assembly, homohexamer. Organized in a ring with a central cavity.

It localises to the cytoplasm. The enzyme catalyses Hydrolysis of proteins in presence of ATP.. Its function is as follows. ATP-dependent serine protease that mediates the selective degradation of mutant and abnormal proteins as well as certain short-lived regulatory proteins. Required for cellular homeostasis and for survival from DNA damage and developmental changes induced by stress. Degrades polypeptides processively to yield small peptide fragments that are 5 to 10 amino acids long. Binds to DNA in a double-stranded, site-specific manner. Regulates swarmer cell differentiation of V.parahaemolyticus. This chain is Lon protease, found in Vibrio parahaemolyticus serotype O3:K6 (strain RIMD 2210633).